The following is a 251-amino-acid chain: MLNLLYNQIFNVILNDVPTPYNTYFQDSATPNQEGILELHDNIMFYLLVILGLVSWLLFTITRTYSKNPIAYKYIKHGQTIEIIWTIFPAVILLIIAFPSFILLYLCDEVISPAMTIKAIGLQWYWKYEYSDFINDSGETVEFESYVIPEDLLEDGQLRLLDTDTSVVVPVDTHIRFVVTAADVIHDFAIPSLGIKVDAAPGRLNQVSALIQREGVFYGQCSELCGTAHSAMPIKIEAVSLPAFLEWLNEQ.

The signal sequence occupies residues 1-15; sequence MLNLLYNQIFNVILN. The Mitochondrial intermembrane segment spans residues 16–41; sequence DVPTPYNTYFQDSATPNQEGILELHD. Residues 42-62 form a helical membrane-spanning segment; that stretch reads NIMFYLLVILGLVSWLLFTIT. Over 63 to 82 the chain is Mitochondrial matrix; it reads RTYSKNPIAYKYIKHGQTIE. A helical transmembrane segment spans residues 83-103; it reads IIWTIFPAVILLIIAFPSFIL. Over 104–251 the chain is Mitochondrial intermembrane; the sequence is LYLCDEVISP…PAFLEWLNEQ (148 aa). Cu cation contacts are provided by His-186, Cys-221, Glu-223, Cys-225, His-229, and Met-232. A Mg(2+)-binding site is contributed by Glu-223.

It belongs to the cytochrome c oxidase subunit 2 family. In terms of assembly, component of the cytochrome c oxidase (complex IV, CIV), a multisubunit enzyme composed of a catalytic core of 3 subunits and several supernumerary subunits. The complex exists as a monomer or a dimer and forms supercomplexes (SCs) in the inner mitochondrial membrane with ubiquinol-cytochrome c oxidoreductase (cytochrome b-c1 complex, complex III, CIII). Cu cation serves as cofactor. Post-translationally, the signal sequence of COX2 is processed by IMP1.

Its subcellular location is the mitochondrion inner membrane. The enzyme catalyses 4 Fe(II)-[cytochrome c] + O2 + 8 H(+)(in) = 4 Fe(III)-[cytochrome c] + 2 H2O + 4 H(+)(out). Its function is as follows. Component of the cytochrome c oxidase, the last enzyme in the mitochondrial electron transport chain which drives oxidative phosphorylation. The respiratory chain contains 3 multisubunit complexes succinate dehydrogenase (complex II, CII), ubiquinol-cytochrome c oxidoreductase (cytochrome b-c1 complex, complex III, CIII) and cytochrome c oxidase (complex IV, CIV), that cooperate to transfer electrons derived from NADH and succinate to molecular oxygen, creating an electrochemical gradient over the inner membrane that drives transmembrane transport and the ATP synthase. Cytochrome c oxidase is the component of the respiratory chain that catalyzes the reduction of oxygen to water. Electrons originating from reduced cytochrome c in the intermembrane space (IMS) are transferred via the dinuclear copper A center (CU(A)) of subunit 2 and heme A of subunit 1 to the active site in subunit 1, a binuclear center (BNC) formed by heme A3 and copper B (CU(B)). The BNC reduces molecular oxygen to 2 water molecules using 4 electrons from cytochrome c in the IMS and 4 protons from the mitochondrial matrix. The sequence is that of Cytochrome c oxidase subunit 2 (COX2) from Lachancea thermotolerans (strain ATCC 56472 / CBS 6340 / NRRL Y-8284) (Yeast).